The chain runs to 815 residues: Ferripyoverdine receptor (815 aa).

The signal sequence occupies residues 1 to 43; sequence MPAPHGLSPLSKAFLMRRAFQRRILPHSLAMALSLPLAGYVQA. The region spanning 161 to 271 is the TBDR plug domain; it reads TPRETPQSIT…LGATINLIRK (111 aa). The TBDR beta-barrel domain occupies 276–815; that stretch reads EFKGHVELGA…NLMFSTRWDF (540 aa). Residues 798–815 carry the TonB C-terminal box motif; that stretch reads SASYGDPRNLMFSTRWDF.

The protein belongs to the TonB-dependent receptor family.

The protein localises to the cell outer membrane. Its function is as follows. Receptor for the siderophore ferripyoverdine. This is Ferripyoverdine receptor (fpvA) from Pseudomonas aeruginosa (strain ATCC 15692 / DSM 22644 / CIP 104116 / JCM 14847 / LMG 12228 / 1C / PRS 101 / PAO1).